The following is a 151-amino-acid chain: MASMQKRLQKELLALQNDPPPGMTLNEKSVQNSITQWIVDMEGAPGTLYEGEKFQLLFKFSSRYPFDSPQVMFTGENIPIHPHVYSNGHICLSILTEDWSPALSVQSVCLSIISMLSSCKEKRRPPDNSFYVRTCNKNPKKTKWWYHDDTC.

A Peptide (Met-Gly) (interchain with G-Cter in ubiquitin) cross-link involves residue M1. One can recognise a UBC core domain in the interval 3–151; that stretch reads SMQKRLQKEL…TKWWYHDDTC (149 aa). C91 (glycyl thioester intermediate) is an active-site residue.

It belongs to the ubiquitin-conjugating enzyme family. As to quaternary structure, homodimer. Interacts with FANCL. Interacts with STUB1/CHIP. Autoubiquitinated at Met-1.

It is found in the nucleus. It catalyses the reaction S-ubiquitinyl-[E1 ubiquitin-activating enzyme]-L-cysteine + [E2 ubiquitin-conjugating enzyme]-L-cysteine = [E1 ubiquitin-activating enzyme]-L-cysteine + S-ubiquitinyl-[E2 ubiquitin-conjugating enzyme]-L-cysteine.. The catalysed reaction is S-ubiquitinyl-[E1 ubiquitin-activating enzyme]-L-cysteine + [acceptor protein]-N-terminal-amino acid = [E1 ubiquitin-activating enzyme]-L-cysteine + N-terminal-ubiquitinyl-[acceptor protein].. Its pathway is protein modification; protein ubiquitination. Its function is as follows. Accepts ubiquitin from the E1 complex and catalyzes its covalent attachment to other proteins. Specifically monoubiquitinates the N-terminus of various substrates, including ATXN3, MAPT/TAU, POLR2H/RPB8 and STUB1/CHIP, by recognizing backbone atoms of disordered N-termini. Involved in degradation of misfolded chaperone substrates by mediating monoubiquitination of STUB1/CHIP, leading to recruitment of ATXN3 to monoubiquitinated STUB1/CHIP, and restriction of the length of ubiquitin chain attached to STUB1/CHIP substrates by ATXN3. After UV irradiation, but not after mitomycin-C (MMC) treatment, acts as a specific E2 ubiquitin-conjugating enzyme for the Fanconi anemia complex by associating with E3 ubiquitin-protein ligase FANCL and catalyzing monoubiquitination of FANCD2, a key step in the DNA damage pathway. In vitro catalyzes 'Lys-11'-linked polyubiquitination. UBE2W-catalyzed ubiquitination also occurs in the presence of inactive RING/U-box type E3s, i.e. lacking the active site cysteine residues to form thioester bonds with ubiquitin, or even in the absence of E3, albeit at a slower rate. The chain is Ubiquitin-conjugating enzyme E2 W (Ube2w) from Mus musculus (Mouse).